The chain runs to 395 residues: Selection and upkeep of intraepithelial T-cells protein 7 (395 aa).

An N-terminal signal peptide occupies residues 1–25 (MMKPEFFCFSGFCVYFLFLQVVVSS). Residues 26-141 (EKLRVTTPTR…DAAIMNLNVT (116 aa)) enclose the Ig-like V-type domain. The Extracellular segment spans residues 26–248 (EKLRVTTPTR…FNRDRIWMES (223 aa)). Cysteine 49 and cysteine 123 are joined by a disulfide. Residues asparagine 92 and asparagine 139 are each glycosylated (N-linked (GlcNAc...) asparagine). The 92-residue stretch at 142–233 (AVGLETEIHV…TGEEKQTSII (92 aa)) folds into the Ig-like C1-type domain. Cysteine 163 and cysteine 217 form a disulfide bridge. The helical transmembrane segment at 249 to 269 (LASIVWIMLSVYILYIICFYW) threads the bilayer. At 270–287 (RTGCASGCLSKCFCVVTS) the chain is on the cytoplasmic side. A helical membrane pass occupies residues 288–308 (WPVQIVHLLFCTGTFFAIYLP). Over 309–329 (HRSRVSLSDPQFPLYNNWITE) the chain is Extracellular. The chain crosses the membrane as a helical span at residues 330–350 (LLFVILFLTICFALPIILLFI). The Cytoplasmic portion of the chain corresponds to 351-395 (QFQFTSLTKWEKNKDGIMDQPRLGKAHETSSLYRKKTGKSWEQEK). The tract at residues 371-395 (PRLGKAHETSSLYRKKTGKSWEQEK) is disordered.

Belongs to the SKINT family. In terms of tissue distribution, expressed in skin, thymus, testis and, to a lower extent, bladder.

Its subcellular location is the membrane. In terms of biological role, may act by engaging a cell surface molecule on immature T-cells in the embryonic thymus. The sequence is that of Selection and upkeep of intraepithelial T-cells protein 7 (Skint7) from Mus musculus (Mouse).